We begin with the raw amino-acid sequence, 73 residues long: Capsid protein G8P (73 aa).

Positions 1–23 are cleaved as a signal peptide; that stretch reads MKKSLVLKASVAVATLVPMLSFA. Residues 24 to 47 are Periplasmic-facing; that stretch reads AEGDDPAKAAFNSLQASATEYIGY. A helical transmembrane segment spans residues 48–68; sequence AWAMVVVIVGATIGIKLFKKF. The Cytoplasmic portion of the chain corresponds to 69–73; the sequence is TSKAS.

The protein belongs to the inovirus capsid protein family. As to quaternary structure, homomultimerizes. There are about 2,700 copies of this protein in the phage capsid.

It is found in the virion. It localises to the host cell inner membrane. Self assembles to form a helical capsid wrapping up the viral genomic DNA. The capsid displays a filamentous structure with a length of 760-1950 nm and a width of 6-8 nm. The virion assembly and budding take place at the host inner membrane. This Enterobacteria phage M13 (Bacteriophage M13) protein is Capsid protein G8P (VIII).